The following is a 178-amino-acid chain: Large ribosomal subunit protein uL5 (178 aa).

This sequence belongs to the universal ribosomal protein uL5 family. Part of the 50S ribosomal subunit; part of the 5S rRNA/L5/L18/L25 subcomplex. Contacts the 5S rRNA and the P site tRNA. Forms a bridge to the 30S subunit in the 70S ribosome.

Its function is as follows. This is one of the proteins that bind and probably mediate the attachment of the 5S RNA into the large ribosomal subunit, where it forms part of the central protuberance. In the 70S ribosome it contacts protein S13 of the 30S subunit (bridge B1b), connecting the 2 subunits; this bridge is implicated in subunit movement. Contacts the P site tRNA; the 5S rRNA and some of its associated proteins might help stabilize positioning of ribosome-bound tRNAs. The polypeptide is Large ribosomal subunit protein uL5 (Acinetobacter baylyi (strain ATCC 33305 / BD413 / ADP1)).